Here is a 263-residue protein sequence, read N- to C-terminus: 4-hydroxy-2-oxo-heptane-1,7-dioate aldolase (263 aa).

Catalysis depends on His-45, which acts as the Proton acceptor. Residue Gln-147 coordinates substrate. Glu-149 serves as a coordination point for a divalent metal cation. Ala-174 and Asp-175 together coordinate substrate. Asp-175 contacts a divalent metal cation.

Belongs to the HpcH/HpaI aldolase family. As to quaternary structure, homohexamer; trimer of dimers. Requires a divalent metal cation as cofactor.

The catalysed reaction is 4-hydroxy-2-oxoheptanedioate = succinate semialdehyde + pyruvate. Its pathway is aromatic compound metabolism; 4-hydroxyphenylacetate degradation; pyruvate and succinate semialdehyde from 4-hydroxyphenylacetate: step 7/7. Functionally, catalyzes the reversible retro-aldol cleavage of 4-hydroxy-2-ketoheptane-1,7-dioate (HKHD) to pyruvate and succinic semialdehyde. This chain is 4-hydroxy-2-oxo-heptane-1,7-dioate aldolase, found in Salmonella typhimurium (strain LT2 / SGSC1412 / ATCC 700720).